A 308-amino-acid polypeptide reads, in one-letter code: Maspardin (308 aa).

Positions 87 to 159 constitute an AB hydrolase-1 domain; that stretch reads FCDGFRKLLD…NSFWLMPAFM (73 aa). Residue S304 is modified to Phosphoserine.

Belongs to the AB hydrolase superfamily. In terms of assembly, interacts with CD4. Interacts with ALDH16A1.

It is found in the cytoplasm. Functionally, may play a role as a negative regulatory factor in CD4-dependent T-cell activation. The protein is Maspardin (SPG21) of Pongo abelii (Sumatran orangutan).